The primary structure comprises 598 residues: Fructan 6-exohydrolase (598 aa).

An N-terminal signal peptide occupies residues 1-30 (MAARLPLAACVVAFHLCLLLSSLVRSPSTA). The active site involves Asp65. Residues Asn93, Asn288, and Asn351 are each glycosylated (N-linked (GlcNAc...) asparagine). The cysteines at positions 451 and 497 are disulfide-linked. Asn572 carries an N-linked (GlcNAc...) asparagine glycan.

Belongs to the glycosyl hydrolase 32 family. As to expression, expressed in leaves, stems, roots and inflorescences. Maximum expression is detected in stems, particularly the penultimate internode.

It carries out the reaction Hydrolysis of terminal, non-reducing (2-&gt;6)-linked beta-D-fructofuranose residues in fructans.. Not inhibited by sucrose. Its function is as follows. Hydrolyzes levan-type beta-(2-&gt;6)-linked fructans to fructose, but not inulin-type beta-(2-&gt;1)-linked fructans. The sequence is that of Fructan 6-exohydrolase from Triticum aestivum (Wheat).